Consider the following 418-residue polypeptide: Tyrosine--tRNA ligase (418 aa).

Y38 contacts L-tyrosine. The 'HIGH' region motif lies at 43–52; sequence CTARSLHIGS. Y175 and Q179 together coordinate L-tyrosine. Positions 235 to 239 match the 'KMSKS' region motif; it reads KMGKT. K238 serves as a coordination point for ATP. Residues 348 to 413 form the S4 RNA-binding domain; it reads LSVVKLLQVS…CGKKRHLKVV (66 aa).

The protein belongs to the class-I aminoacyl-tRNA synthetase family. TyrS type 1 subfamily. As to quaternary structure, homodimer.

The protein resides in the cytoplasm. It catalyses the reaction tRNA(Tyr) + L-tyrosine + ATP = L-tyrosyl-tRNA(Tyr) + AMP + diphosphate + H(+). Catalyzes the attachment of tyrosine to tRNA(Tyr) in a two-step reaction: tyrosine is first activated by ATP to form Tyr-AMP and then transferred to the acceptor end of tRNA(Tyr). The protein is Tyrosine--tRNA ligase of Ehrlichia ruminantium (strain Gardel).